Reading from the N-terminus, the 185-residue chain is MKLIAGLGNPGGQYAETRHNAGFLLLDCLAEELKLDFRPKFQGLVAETMMGGEKVYLLKPQTFMNLSGRSIRELAQFYKIAPKDIMVVYDDMDLPIGRLRLRSSGSAGGHNGIKSTIAELGTEDFWRLKVGIGRPTAGWDSARYVLASFTKEELPVLEEILDKGIKAVTLWAKEGGDKAMNLYNR.

Tyr14 contributes to the tRNA binding site. His19 serves as the catalytic Proton acceptor. TRNA-binding residues include Phe63, Asn65, and Asn111.

Belongs to the PTH family. Monomer.

It is found in the cytoplasm. It carries out the reaction an N-acyl-L-alpha-aminoacyl-tRNA + H2O = an N-acyl-L-amino acid + a tRNA + H(+). Functionally, hydrolyzes ribosome-free peptidyl-tRNAs (with 1 or more amino acids incorporated), which drop off the ribosome during protein synthesis, or as a result of ribosome stalling. Its function is as follows. Catalyzes the release of premature peptidyl moieties from peptidyl-tRNA molecules trapped in stalled 50S ribosomal subunits, and thus maintains levels of free tRNAs and 50S ribosomes. This chain is Peptidyl-tRNA hydrolase, found in Desulfitobacterium hafniense (strain Y51).